The following is a 225-amino-acid chain: Potassium-transporting ATPase KdpC subunit (225 aa).

The chain crosses the membrane as a helical span at residues 18–38 (ALLVLTVVTGIVYPLVVTGVA). A disordered region spans residues 134-161 (NSVPGHPVRPEDVPADAVTSSGSGLDPD).

This sequence belongs to the KdpC family. The system is composed of three essential subunits: KdpA, KdpB and KdpC.

The protein localises to the cell membrane. Its function is as follows. Part of the high-affinity ATP-driven potassium transport (or Kdp) system, which catalyzes the hydrolysis of ATP coupled with the electrogenic transport of potassium into the cytoplasm. This subunit acts as a catalytic chaperone that increases the ATP-binding affinity of the ATP-hydrolyzing subunit KdpB by the formation of a transient KdpB/KdpC/ATP ternary complex. This is Potassium-transporting ATPase KdpC subunit from Streptomyces coelicolor (strain ATCC BAA-471 / A3(2) / M145).